Here is a 912-residue protein sequence, read N- to C-terminus: Effector protein hopAE1 (912 aa).

Polar residues predominate over residues 1–13 (MMPSQITRSSHSS). A disordered region spans residues 1 to 32 (MMPSQITRSSHSSLPEVAPASGDATGVSEQTP).

Belongs to the HopW family.

It localises to the secreted. The sequence is that of Effector protein hopAE1 (hopAE1) from Pseudomonas savastanoi pv. phaseolicola (strain 1448A / Race 6) (Pseudomonas syringae pv. phaseolicola (strain 1448A / Race 6)).